The primary structure comprises 342 residues: Dihydroorotate dehydrogenase (quinone) (342 aa).

FMN contacts are provided by residues 61-65 (AGLDK) and Thr85. Lys65 is a binding site for substrate. Residue 110 to 114 (NRMGF) participates in substrate binding. FMN contacts are provided by Asn138 and Asn171. Position 171 (Asn171) interacts with substrate. Ser174 serves as the catalytic Nucleophile. Residue Asn176 participates in substrate binding. The FMN site is built by Lys216 and Thr244. 245-246 (NT) contributes to the substrate binding site. FMN contacts are provided by residues Gly267, Gly296, and 317–318 (YS).

The protein belongs to the dihydroorotate dehydrogenase family. Type 2 subfamily. In terms of assembly, monomer. The cofactor is FMN.

It localises to the cell membrane. It carries out the reaction (S)-dihydroorotate + a quinone = orotate + a quinol. It functions in the pathway pyrimidine metabolism; UMP biosynthesis via de novo pathway; orotate from (S)-dihydroorotate (quinone route): step 1/1. Catalyzes the conversion of dihydroorotate to orotate with quinone as electron acceptor. The polypeptide is Dihydroorotate dehydrogenase (quinone) (Cellvibrio japonicus (strain Ueda107) (Pseudomonas fluorescens subsp. cellulosa)).